We begin with the raw amino-acid sequence, 447 residues long: MRATTGARHLHPPWRRGLRHHRQSTMPPRASRGRLADAALFTAGAVLGSVLLLTLASPFSSSSSPSSGVGSGEVDRLGGGRTFYDDPGVAYTIDRPIVGWDEKRAEWLRAHPELAGGGGERVLMVSGSQPEPCGSPAGDSLLTRLLKNKLDYCRLNGVQLLYNTALLRPSMDRYWAKIPVVRAAMVAHPEAEWVWWVDSDAVLTDMDFRLPLSRYRDHNFVAHGWPHLVYESRSWTSLNAGVFLIRNCQWSLDFMDAWAAMGPDSPEYQHWGAVLTSTFKDKVFNESDDQSALVYMLLQSGSPWRDKVYLESDYYFEGYWLEIAGRLGNITERYEAMERGAAPLRRRHAEAEHASYAAARDAALAGAGLAESGVSGWRRPFVTHFTGCQPCSGHRNEHYTGKSCDEGIRRALSFADDQVLRAYGFRHAGPLSDAVSPLPFDHPTQTA.

A disordered region spans residues 1–31 (MRATTGARHLHPPWRRGLRHHRQSTMPPRAS). The Cytoplasmic segment spans residues 1–37 (MRATTGARHLHPPWRRGLRHHRQSTMPPRASRGRLAD). Residues 8–23 (RHLHPPWRRGLRHHRQ) show a composition bias toward basic residues. A helical; Signal-anchor for type II membrane protein membrane pass occupies residues 38–60 (AALFTAGAVLGSVLLLTLASPFS). The Lumenal segment spans residues 61 to 447 (SSSSPSSGVG…LPFDHPTQTA (387 aa)). Residues Asn-285 and Asn-329 are each glycosylated (N-linked (GlcNAc...) asparagine).

This sequence belongs to the glycosyltransferase 34 family.

Its subcellular location is the golgi apparatus membrane. Functionally, probable glycosyltransferase that may be involved in the biosynthesis of xyloglucan. The protein is Probable glycosyltransferase 7 of Oryza sativa subsp. indica (Rice).